Reading from the N-terminus, the 279-residue chain is MRRLFLFSLLFLFFYSSSSSRSSSESHIFIYGGCSPEKYTPNTPFESNRDTFLSSVVTSSSDASFNSFAVGNDSSSSSSSSAVFGLYQCRDDLRSSDCSKCIQTSVDQITLICPYSYGASLQLEGCFLRYETNDFLGKPDTSLRYKKCSSKSVENDYDFFKRRDDVLSDLESTQLGYKVSRSGLVEGYAQCVGDLSPSDCTACLAESVGKLKNLCGSAVAAEVYLAQCYARYWGSGYYDFSSDPTNGDHVGKSIAIIVGVIAGFAILVVLLSLCRNSMH.

The first 20 residues, 1–20 (MRRLFLFSLLFLFFYSSSSS), serve as a signal peptide directing secretion. Residues 21-253 (RSSSESHIFI…PTNGDHVGKS (233 aa)) lie on the Extracellular side of the membrane. Gnk2-homologous domains follow at residues 27-135 (HIFI…TNDF) and 137-237 (GKPD…GSGY). 6 cysteine pairs are disulfide-bonded: cysteine 34–cysteine 113, cysteine 89–cysteine 98, cysteine 101–cysteine 126, cysteine 148–cysteine 215, cysteine 191–cysteine 200, and cysteine 203–cysteine 228. A helical membrane pass occupies residues 254–274 (IAIIVGVIAGFAILVVLLSLC). The segment at 254–274 (IAIIVGVIAGFAILVVLLSLC) is necessary and sufficient for plasmodesmal targeting. The Cytoplasmic segment spans residues 275–279 (RNSMH).

This sequence belongs to the cysteine-rich repeat secretory protein family. Plasmodesmata-located proteins (PDLD) subfamily. As to quaternary structure, interacts with ACBP6; interaction occurs at the plasma membrane. (Microbial infection) Interacts with Grapevine fanleaf virus (GFLV) 2B-MP. Highly expressed in pollen, lateral root and elongation zone. Higher expression in the reproductive tissues (flowers and buds) than in vegetative organs (leaves and stems). High expression in shoot and root phloem companion cells (at protein level).

It localises to the cell membrane. It is found in the cell junction. Its subcellular location is the plasmodesma. Modulates cell-to-cell trafficking. This chain is Plasmodesmata-located protein 8, found in Arabidopsis thaliana (Mouse-ear cress).